The sequence spans 87 residues: Small ribosomal subunit protein bS16 (87 aa).

It belongs to the bacterial ribosomal protein bS16 family.

The chain is Small ribosomal subunit protein bS16 from Ehrlichia ruminantium (strain Welgevonden).